The following is a 142-amino-acid chain: Large ribosomal subunit protein uL11 (142 aa).

It belongs to the universal ribosomal protein uL11 family. As to quaternary structure, part of the ribosomal stalk of the 50S ribosomal subunit. Interacts with L10 and the large rRNA to form the base of the stalk. L10 forms an elongated spine to which L12 dimers bind in a sequential fashion forming a multimeric L10(L12)X complex. In terms of processing, one or more lysine residues are methylated.

Forms part of the ribosomal stalk which helps the ribosome interact with GTP-bound translation factors. This Pectobacterium carotovorum subsp. carotovorum (strain PC1) protein is Large ribosomal subunit protein uL11.